The following is a 298-amino-acid chain: GTP cyclohydrolase FolE2 (298 aa).

It belongs to the GTP cyclohydrolase IV family.

The catalysed reaction is GTP + H2O = 7,8-dihydroneopterin 3'-triphosphate + formate + H(+). Its pathway is cofactor biosynthesis; 7,8-dihydroneopterin triphosphate biosynthesis; 7,8-dihydroneopterin triphosphate from GTP: step 1/1. In terms of biological role, converts GTP to 7,8-dihydroneopterin triphosphate. The chain is GTP cyclohydrolase FolE2 from Pseudomonas aeruginosa (strain UCBPP-PA14).